Consider the following 1087-residue polypeptide: Fanconi-associated nuclease 1 homolog (1087 aa).

Disordered stretches follow at residues 1–79, 104–154, 169–202, 459–486, 816–835, and 842–871; these read MKSN…TPIK, FQKA…PNNL, EFLL…NNIT, TQNS…NNNI, ITSD…EKEN, and SVKK…EEEI. Low complexity predominate over residues 41-79; that stretch reads TTTPPKTPTQPIRFTQNNNKENDKSNNNNNNNNTITPIK. A compositionally biased stretch (polar residues) spans 104–115; sequence FQKASTPSSPQI. Composition is skewed to low complexity over residues 118-154, 182-202, and 467-485; these read KLPQ…PNNL, NTTT…NNIT, and NNNN…NNNN. 2 coiled-coil regions span residues 419-490 and 830-874; these read WKSK…KEYD and KIEK…IIEI. A compositionally biased stretch (acidic residues) spans 848–871; the sequence is EQEEEEEEEEEGQGQEEEEEEEEI. 4 residues coordinate Mn(2+): Glu899, Asp1023, Glu1051, and Val1052. The VRR-NUC domain occupies 961 to 1083; the sequence is DDLLILLNQS…GCDVEVCLVK (123 aa).

It belongs to the FAN1 family. It depends on Mn(2+) as a cofactor. Mg(2+) serves as cofactor.

The catalysed reaction is Hydrolytically removes 5'-nucleotides successively from the 3'-hydroxy termini of 3'-hydroxy-terminated oligonucleotides.. Functionally, nuclease required for the repair of DNA interstrand cross-links (ICL). Acts as a 5'-3' exonuclease that anchors at a cut end of DNA and cleaves DNA successively at every third nucleotide, allowing to excise an ICL from one strand through flanking incisions. The chain is Fanconi-associated nuclease 1 homolog (mtmr15) from Dictyostelium discoideum (Social amoeba).